Here is a 726-residue protein sequence, read N- to C-terminus: Catalase-peroxidase (726 aa).

The tract at residues 1–33 (MSTSDDIHNTTATGKCPFHQGGHDQSAGGGTTT) is disordered. Residues 105 to 226 (WHGAGTYRSI…LGATEMGLIY (122 aa)) constitute a cross-link (tryptophyl-tyrosyl-methioninium (Trp-Tyr) (with M-252)). H106 functions as the Proton acceptor in the catalytic mechanism. A cross-link (tryptophyl-tyrosyl-methioninium (Tyr-Met) (with W-105)) is located at residues 226–252 (YVNPEGPDHSGEPLSAAAAIRATFGNM). H267 lines the heme b pocket.

Belongs to the peroxidase family. Peroxidase/catalase subfamily. As to quaternary structure, homodimer or homotetramer. It depends on heme b as a cofactor. Post-translationally, formation of the three residue Trp-Tyr-Met cross-link is important for the catalase, but not the peroxidase activity of the enzyme.

It catalyses the reaction H2O2 + AH2 = A + 2 H2O. The catalysed reaction is 2 H2O2 = O2 + 2 H2O. Bifunctional enzyme with both catalase and broad-spectrum peroxidase activity. This chain is Catalase-peroxidase, found in Escherichia coli (strain UTI89 / UPEC).